A 347-amino-acid chain; its full sequence is Quinolinate synthase (347 aa).

The iminosuccinate site is built by H47 and S68. [4Fe-4S] cluster is bound at residue C113. Iminosuccinate-binding positions include 139-141 and S156; that span reads YAN. C200 is a [4Fe-4S] cluster binding site. Iminosuccinate is bound by residues 226-228 and T243; that span reads HPE. A [4Fe-4S] cluster-binding site is contributed by C297.

Belongs to the quinolinate synthase family. Type 1 subfamily. It depends on [4Fe-4S] cluster as a cofactor.

It localises to the cytoplasm. It catalyses the reaction iminosuccinate + dihydroxyacetone phosphate = quinolinate + phosphate + 2 H2O + H(+). Its pathway is cofactor biosynthesis; NAD(+) biosynthesis; quinolinate from iminoaspartate: step 1/1. Functionally, catalyzes the condensation of iminoaspartate with dihydroxyacetone phosphate to form quinolinate. The protein is Quinolinate synthase of Salmonella enteritidis PT4 (strain P125109).